A 470-amino-acid chain; its full sequence is Hydroxymethylglutaryl-CoA synthase (470 aa).

Glutamate 100 (proton donor/acceptor) is an active-site residue. The active-site Acyl-thioester intermediate is cysteine 134. (3S)-3-hydroxy-3-methylglutaryl-CoA contacts are provided by cysteine 134, threonine 176, serine 225, histidine 269, lysine 278, asparagine 348, and serine 382. Residue histidine 269 is the Proton donor/acceptor of the active site.

Belongs to the thiolase-like superfamily. HMG-CoA synthase family.

The catalysed reaction is acetoacetyl-CoA + acetyl-CoA + H2O = (3S)-3-hydroxy-3-methylglutaryl-CoA + CoA + H(+). Its pathway is metabolic intermediate biosynthesis; (R)-mevalonate biosynthesis; (R)-mevalonate from acetyl-CoA: step 2/3. Its function is as follows. Hydroxymethylglutaryl-CoA synthase; part of the first module of ergosterol biosynthesis pathway that includes the early steps of the pathway, conserved across all eukaryotes, and which results in the formation of mevalonate from acetyl-coenzyme A (acetyl-CoA). This module also plays a key role in the biosynthesis of triterpenes such as ganoderic acids (GA), a group of highly oxygenated lanostane-type triterpenoids which are well recognized as a main group of unique bioactive compounds in the medicinal mushroom Ganoderma lucidum. In this module, the acetyl-CoA acetyltransferase catalyzes the formation of acetoacetyl-CoA. The hydroxymethylglutaryl-CoA synthase HMGS then condenses acetyl-CoA with acetoacetyl-CoA to form HMG-CoA. The rate-limiting step of the early module is the reduction to mevalonate by the 3-hydroxy-3-methylglutaryl-coenzyme A (HMG-CoA) reductase. In Ganoderma lucidum (Ling zhi medicinal fungus), this protein is Hydroxymethylglutaryl-CoA synthase.